The following is a 673-amino-acid chain: MSKQGKPFILHSPFKPSGDQPSAIAKLTEGLNDGLAHQTLLGVTGSGKTFTIANVIAQLNRPAMLLAPNKTLAAQLYAEMKAFFPENAVEYFVSYYDYYQPEAYVPSSDTFIEKDASINEQIEQMRLSATKSFLERRDTIVVASVSAIYGLGDVDAYMQMMLHLQLGAIIDQREILARLAELQYTRNDQAFQRSTFRVRGEVIDIFPAESDEIALRVELFDDEIESLSLFDPLTGHSLGKVPRYTIYPKTHYVTPRERILNAIEEIKQELVERREYFIKENKLLEEQRITQRTQFDIEMMNELGYCSGIENYSRYLSGRKEGEPPPTLFDYMPADGLLIIDESHVTVPQIGGMYRGDRARKETLVQYGFRLPSALDNRPLRFEEFERLAPQTIYVSATPGNYELEKSNGDVVDQVVRPTGLLDPIIEVRPVATQVDDVLSEIHKRVAVDERVLITTLTKKMAEDLTDYLDEHGVRVRYLHSDIDTVERVEIIHDLRMGMFDVLVGINLLREGLDMPEVSLVAILDADKEGFLRSERSLIQTIGRAARNLNGKAILYGDRITNSMQKAITETERRREKQQKYNEEHGITPQALNKKVGELLDIGQTDKPKRGKQAVKVEEKSANTYKPKSRKELEKELKQLEQQMRDFAKDLEFEKAAAVRDKIGQLKAVLLEV.

The Helicase ATP-binding domain occupies 29 to 188 (EGLNDGLAHQ…LAELQYTRND (160 aa)). Residue 42–49 (GVTGSGKT) coordinates ATP. The Beta-hairpin signature appears at 95–118 (YYDYYQPEAYVPSSDTFIEKDASI). The 167-residue stretch at 434–600 (QVDDVLSEIH…ALNKKVGELL (167 aa)) folds into the Helicase C-terminal domain. The segment at 607 to 632 (KPKRGKQAVKVEEKSANTYKPKSRKE) is disordered. Positions 634 to 669 (EKELKQLEQQMRDFAKDLEFEKAAAVRDKIGQLKAV) constitute a UVR domain.

The protein belongs to the UvrB family. In terms of assembly, forms a heterotetramer with UvrA during the search for lesions. Interacts with UvrC in an incision complex.

It is found in the cytoplasm. In terms of biological role, the UvrABC repair system catalyzes the recognition and processing of DNA lesions. A damage recognition complex composed of 2 UvrA and 2 UvrB subunits scans DNA for abnormalities. Upon binding of the UvrA(2)B(2) complex to a putative damaged site, the DNA wraps around one UvrB monomer. DNA wrap is dependent on ATP binding by UvrB and probably causes local melting of the DNA helix, facilitating insertion of UvrB beta-hairpin between the DNA strands. Then UvrB probes one DNA strand for the presence of a lesion. If a lesion is found the UvrA subunits dissociate and the UvrB-DNA preincision complex is formed. This complex is subsequently bound by UvrC and the second UvrB is released. If no lesion is found, the DNA wraps around the other UvrB subunit that will check the other stand for damage. This chain is UvrABC system protein B, found in Actinobacillus pleuropneumoniae serotype 5b (strain L20).